The sequence spans 243 residues: Coproheme decarboxylase (243 aa).

The active site involves tyrosine 145. Histidine 168 is a Fe-coproporphyrin III binding site.

The protein belongs to the ChdC family. Type 2 subfamily. Fe-coproporphyrin III serves as cofactor.

The enzyme catalyses Fe-coproporphyrin III + 2 H2O2 + 2 H(+) = heme b + 2 CO2 + 4 H2O. It carries out the reaction Fe-coproporphyrin III + H2O2 + H(+) = harderoheme III + CO2 + 2 H2O. It catalyses the reaction harderoheme III + H2O2 + H(+) = heme b + CO2 + 2 H2O. It participates in porphyrin-containing compound metabolism; protoheme biosynthesis. Its function is as follows. Involved in coproporphyrin-dependent heme b biosynthesis. Catalyzes the decarboxylation of Fe-coproporphyrin III (coproheme) to heme b (protoheme IX), the last step of the pathway. The reaction occurs in a stepwise manner with a three-propionate intermediate. The chain is Coproheme decarboxylase from Streptomyces coelicolor (strain ATCC BAA-471 / A3(2) / M145).